The primary structure comprises 415 residues: Membrane-bound ghrelin O-acyltransferase mboat4 (415 aa).

The Lumenal portion of the chain corresponds to 1-6; it reads MIDLLW. The helical transmembrane segment at 7 to 28 threads the bilayer; that stretch reads ISSDGHPQLFYQFINIPFAFLF. Residues 29–42 lie on the Cytoplasmic side of the membrane; the sequence is HCLSSQGHLSIINR. The chain crosses the membrane as a helical span at residues 43 to 58; that stretch reads YVYLAMGGFMLAIATM. The Lumenal segment spans residues 59–61; it reads GPY. A helical membrane pass occupies residues 62 to 78; sequence SSLLFLSAIKLLLLIHY. At 79–84 the chain is on the cytoplasmic side; that stretch reads IHPMHL. Residues 85–103 traverse the membrane as a helical segment; the sequence is HRWILGLQMCWQTCWHLYV. The Lumenal segment spans residues 104-122; that stretch reads QYQIYWLQEAPDSRLLLAI. A helical membrane pass occupies residues 123-138; sequence SALMLMTQRISSLSLD. Topologically, residues 139 to 193 are cytoplasmic; the sequence is FQEGTISNQSILIPFLTYSLYFPALLGGPLCSFNAFVQSVERQHTSMTSYLGNLT. The helical transmembrane segment at 194–214 threads the bilayer; it reads SKISQVIVLVWIKQLFSELLK. Over 215–227 the chain is Lumenal; the sequence is SATFNIDSVCLDV. A helical transmembrane segment spans residues 228–247; sequence LWIWIFSLTLRLNYYAHWKM. Over 248-312 the chain is Cytoplasmic; that stretch reads SECVNNAAGL…RKIVFNRTSR (65 aa). Active-site residues include N295 and H326. A helical transmembrane segment spans residues 313–326; sequence SPLFMTFGFSALWH. Topologically, residues 327–328 are lumenal; it reads GL. The helical transmembrane segment at 329 to 345 threads the bilayer; that stretch reads HPGQILGFLIWAVTVQA. Over 346-364 the chain is Cytoplasmic; the sequence is DYKLHRFSHPKLNSLWRKR. Residues 365-385 form a helical membrane-spanning segment; that stretch reads LYVCVNWAFTQLTVACVVVCV. The Lumenal portion of the chain corresponds to 386–394; that stretch reads ELQSLASVK. Residues 395 to 415 traverse the membrane as a helical segment; it reads LLWSSCIAVFPLLSALILIIL.

This sequence belongs to the membrane-bound acyltransferase family. As to quaternary structure, monomer. In terms of processing, not glycosylated.

The protein localises to the endoplasmic reticulum membrane. It carries out the reaction octanoyl-CoA + L-seryl-[protein] = O-octanoyl-L-seryl-[protein] + CoA. It catalyses the reaction decanoyl-CoA + L-seryl-[protein] = O-decanoyl-L-seryl-[protein] + CoA. The enzyme catalyses L-seryl-[protein] + acetyl-CoA = O-acetyl-L-seryl-[protein] + CoA. The catalysed reaction is L-seryl-[protein] + butanoyl-CoA = O-butanoyl-L-seryl-[protein] + CoA. It carries out the reaction pentanoyl-CoA + L-seryl-[protein] = O-pentanoyl-L-seryl-[protein] + CoA. It catalyses the reaction hexanoyl-CoA + L-seryl-[protein] = O-hexanoyl-L-seryl-[protein] + CoA. The enzyme catalyses heptanoyl-CoA + L-seryl-[protein] = O-heptanoyl-L-seryl-[protein] + CoA. The catalysed reaction is nonanoyl-CoA + L-seryl-[protein] = O-nonanoyl-L-seryl-[protein] + CoA. It carries out the reaction L-seryl-[protein] + dodecanoyl-CoA = O-dodecanoyl-L-seryl-[protein] + CoA. It catalyses the reaction L-seryl-[protein] + tetradecanoyl-CoA = O-tetradecanoyl-L-seryl-[protein] + CoA. The enzyme catalyses a fatty acyl-CoA + L-seryl-[protein] = O-fatty acyl-L-seryl-[protein] + CoA. Functionally, catalyzes ghrelin acylation at 'Ser-3' using preferentially octanoyl-CoA, hexanoyl-CoA and decanoyl-CoA as acyl-CoA donors leading to ghrelin activity. In vitro uses also acyl-CoA donors of different lengths from short-chain (C2) to long-chain fatty acids (C16) knowing that acyl-CoA donors from butanoyl-CoA (C4) to dodecanoyl-CoA (C12) are more efficient compared to longer acyl-CoA donors, such as myristoyl-CoA (C14) and palmitoyl-CoA (C16) that are not efficient. The chain is Membrane-bound ghrelin O-acyltransferase mboat4 from Danio rerio (Zebrafish).